The chain runs to 248 residues: Coenzyme F420:L-glutamate ligase (248 aa).

Residues 15–18 (IPLI), 45–46 (ET), and K50 contribute to the GTP site. Position 115 (D115) interacts with a divalent metal cation. GTP is bound at residue N118. 3 residues coordinate a divalent metal cation: D155, S156, and Q213. A GTP-binding site is contributed by 211-218 (MGQSNEGI).

Belongs to the CofE family. As to quaternary structure, homodimer. Mg(2+) serves as cofactor. Mn(2+) is required as a cofactor. It depends on K(+) as a cofactor.

It catalyses the reaction oxidized coenzyme F420-0 + GTP + L-glutamate = oxidized coenzyme F420-1 + GDP + phosphate + H(+). The catalysed reaction is oxidized coenzyme F420-1 + GTP + L-glutamate = oxidized coenzyme F420-2 + GDP + phosphate + H(+). It participates in cofactor biosynthesis; coenzyme F420 biosynthesis. Catalyzes the GTP-dependent successive addition of two or more gamma-linked L-glutamates to the L-lactyl phosphodiester of 7,8-didemethyl-8-hydroxy-5-deazariboflavin (F420-0) to form coenzyme F420-0-glutamyl-glutamate (F420-2) or polyglutamated F420 derivatives. This Methanococcus maripaludis (strain DSM 14266 / JCM 13030 / NBRC 101832 / S2 / LL) protein is Coenzyme F420:L-glutamate ligase.